A 438-amino-acid polypeptide reads, in one-letter code: Polycomb protein eed-B (438 aa).

The disordered stretch occupies residues methionine 1–tryptophan 70. Over residues serine 40–alanine 57 the composition is skewed to polar residues. WD repeat units lie at residues aspartate 88–leucine 131, aspartate 139–histidine 182, glycine 185–isoleucine 225, glycine 231–alanine 270, isoleucine 301–glutamate 338, serine 356–alanine 396, and lysine 405–arginine 438.

It belongs to the WD repeat ESC family. In terms of assembly, component of the prc2/eed-ezh2 complex. Can interact with ezh2, hdac1 and taf9. Interacts with yy1.

It localises to the nucleus. Polycomb group (PcG) protein. Component of the prc2/eed-ezh2 complex, which methylates 'Lys-9' and 'Lys-27' of histone H3, leading to transcriptional repression of the affected target gene. May play a role in neural induction. The chain is Polycomb protein eed-B (eed-b) from Xenopus laevis (African clawed frog).